Reading from the N-terminus, the 310-residue chain is ADP-L-glycero-D-manno-heptose-6-epimerase (310 aa).

Residues 10–11 (FI), 31–32 (DN), Lys38, Lys53, 75–79 (EGACS), and Asn92 each bind NADP(+). Catalysis depends on Tyr140, which acts as the Proton acceptor. Lys144 is an NADP(+) binding site. Asn169 is a substrate binding site. Val170 and Lys178 together coordinate NADP(+). Lys178 (proton acceptor) is an active-site residue. Substrate is bound by residues Ser180, His187, 201-204 (FEGS), Arg209, and Tyr272.

It belongs to the NAD(P)-dependent epimerase/dehydratase family. HldD subfamily. In terms of assembly, homopentamer. It depends on NADP(+) as a cofactor.

The catalysed reaction is ADP-D-glycero-beta-D-manno-heptose = ADP-L-glycero-beta-D-manno-heptose. It functions in the pathway nucleotide-sugar biosynthesis; ADP-L-glycero-beta-D-manno-heptose biosynthesis; ADP-L-glycero-beta-D-manno-heptose from D-glycero-beta-D-manno-heptose 7-phosphate: step 4/4. In terms of biological role, catalyzes the interconversion between ADP-D-glycero-beta-D-manno-heptose and ADP-L-glycero-beta-D-manno-heptose via an epimerization at carbon 6 of the heptose. The sequence is that of ADP-L-glycero-D-manno-heptose-6-epimerase from Salmonella newport (strain SL254).